A 481-amino-acid polypeptide reads, in one-letter code: U6 small nuclear RNA (adenine-(43)-N(6))-methyltransferase (481 aa).

Residues lysine 82, glycine 108, aspartate 131, threonine 164, and asparagine 184 each coordinate S-adenosyl-L-methionine.

The protein belongs to the methyltransferase superfamily. METTL16/RlmF family. As to quaternary structure, self-associates. Interacts with dlc-1; the interaction is direct, and is required for nuclear localization of mett-10.

It localises to the nucleus. It catalyses the reaction an adenosine in mRNA + S-adenosyl-L-methionine = an N(6)-methyladenosine in mRNA + S-adenosyl-L-homocysteine + H(+). The enzyme catalyses adenosine in U6 snRNA + S-adenosyl-L-methionine = N(6)-methyladenosine in U6 snRNA + S-adenosyl-L-homocysteine + H(+). Its function is as follows. RNA N6-methyltransferase that methylates adenosine residues at the N(6) position of a subset of RNAs and is involved in S-adenosyl-L-methionine homeostasis by regulating splicing of S-adenosylmethionine synthase transcripts (sams-3, sams-4 and sams-5). Able to N6-methylate a subset of mRNAs containing the 5'UACAGAAAC-3' nonamer sequence. Plays a key role in S-adenosyl-L-methionine homeostasis: under rich-diet conditions, catalyzes N6-methylation of S-adenosylmethionine synthase mRNAs (sams-3, sams-4 and sams-5), directly inhibiting splicing and protein production of S-adenosylmethionine synthase. In addition to mRNAs, also able to mediate N6-methylation of U6 small nuclear RNA (U6 snRNA). Required for gamete production, inhibiting germ cell proliferative fate and ensuring germ cell meiotic development. Also promotes progression of the mitotic cell cycle in those germ cells that continue to proliferate. Plays a role in the development of the vulva, somatic gonad and embryo. The chain is U6 small nuclear RNA (adenine-(43)-N(6))-methyltransferase from Caenorhabditis briggsae.